The chain runs to 603 residues: MSIDQSKIRNFCIIAHIDHGKSTLADRIIEKTGTLTSREMQAQVLDNMDLERERGITIKSQAVRIIYTAKDGEEYIFNLIDTPGHVDFNYEVSRSLAACDGAILVVDAAQGVEAQTLANVYLALDHDLDVFPVINKVDLPSARPDEVAQEIEDVIGIEAMDAPRISAKTGLNIEDVLEQIVKKIPAPTGDKDAPLKALIFDATYDSYKGVIIFCRLREGSVKVGDTIKMMATGASDVVTEVGYFGAGQFIPCDELSAGMVGYIAASIKNVRDTRVGDTVTLVDRPCDEALPGYKKVNPMVYCGLYPADSAKYPDLRDALEKLQVNDASLQFEPETSLALGFGFRCGFLGLLHLEIIQERLEREFDLDLVTTAPSVIYKIHKTSGEVIDLTNPSNMPDPSEIEYMEEPYVSAEIMVTSDYVGAIMKLCQERRGVYISMEYIEKTRALIKYDLPLNEIIYDFFDALKSRSRGYASFDYEMKDYERSELVKLDILINKEMVDALSFIVFKESAYERGRKMCEKLKGEIPRHLFEIPIQAAVGGKIIARETVKALRKDVLAKCYGGDISRKKKLLEKQKEGKKRMRQVGNVEIPQEAFMSVLKLDEE.

Residues 6 to 188 (SKIRNFCIIA…QIVKKIPAPT (183 aa)) enclose the tr-type G domain. GTP is bound by residues 18–23 (DHGKST) and 135–138 (NKVD).

Belongs to the TRAFAC class translation factor GTPase superfamily. Classic translation factor GTPase family. LepA subfamily.

The protein resides in the cell membrane. It catalyses the reaction GTP + H2O = GDP + phosphate + H(+). Its function is as follows. Required for accurate and efficient protein synthesis under certain stress conditions. May act as a fidelity factor of the translation reaction, by catalyzing a one-codon backward translocation of tRNAs on improperly translocated ribosomes. Back-translocation proceeds from a post-translocation (POST) complex to a pre-translocation (PRE) complex, thus giving elongation factor G a second chance to translocate the tRNAs correctly. Binds to ribosomes in a GTP-dependent manner. The chain is Elongation factor 4 from Agathobacter rectalis (strain ATCC 33656 / DSM 3377 / JCM 17463 / KCTC 5835 / VPI 0990) (Eubacterium rectale).